We begin with the raw amino-acid sequence, 496 residues long: Lysine--tRNA ligase (496 aa).

The Mg(2+) site is built by E409 and E416.

The protein belongs to the class-II aminoacyl-tRNA synthetase family. As to quaternary structure, homodimer. The cofactor is Mg(2+).

It is found in the cytoplasm. It catalyses the reaction tRNA(Lys) + L-lysine + ATP = L-lysyl-tRNA(Lys) + AMP + diphosphate. In Streptococcus agalactiae serotype III (strain NEM316), this protein is Lysine--tRNA ligase.